Consider the following 592-residue polypeptide: AT-rich interactive domain-containing protein 5A (592 aa).

Positions 1 to 53 (MAPPVKGKRKQSEEGEPLDPPVSPQPDGEPRSRSPVRLEEPPEAGREREEEQE) are disordered. The interval 1 to 299 (MAPPVKGKRK…AAPPLESPQS (299 aa)) is interaction with SOX9. Residue serine 23 is modified to Phosphoserine. The span at 28–49 (GEPRSRSPVRLEEPPEAGRERE) shows a compositional bias: basic and acidic residues. The ARID domain occupies 52-144 (QEEEQAFLVS…LVLPYVRHLK (93 aa)). Residues lysine 82 and lysine 91 each participate in a glycyl lysine isopeptide (Lys-Gly) (interchain with G-Cter in ubiquitin) cross-link. Positions 143–225 (LKGEDDKPLP…RGPAAGPSLP (83 aa)) are disordered. Residues 162 to 186 (MAKEPRGDDGATERPKKVKEEKRVD) are compositionally biased toward basic and acidic residues. The residue at position 253 (serine 253) is a Phosphoserine. The tract at residues 277–333 (CRHGAGGEPQAPPAAPPLESPQSPGGPAEDSRHRLTPLEGRQAPGGGLWGETQAGPR) is disordered. Residues 286 to 295 (QAPPAAPPLE) show a composition bias toward pro residues. Serine 438 and serine 463 each carry phosphoserine.

As to quaternary structure, interacts with SOX9. Interacts with ESR1. Interacts with RORC. Phosphorylated by MAPK14 on serine residues involving a TLR4 signaling pathway upon lipopolysaccharide (LPS) stimulation leading to its ubiquitination and proteasomal degradation. Post-translationally, ubiquitinated leading to proteasomal degradation; involving WWP1 linked to MAPK14-mediated phosphorylation upon LPS stimulation.

It is found in the nucleus. Its function is as follows. DNA-binding protein that may regulate transcription and act as a repressor by binding to AT-rich stretches in the promoter region of target genes. May act as repressor and down-regulate enhancer-dependent gene expressison. May positively regulate chondrocyte-specific transcription such as of COL2A1 in collaboration with SOX9 and positively regulate histone H3 acetylation at chondrocyte-specific genes. May stimulate early-stage chondrocyte differentiation and inhibit later stage differention. Can repress ESR1-mediated transcriptional activation; proposed to act as corepressor for selective nuclear hormone receptors. As an RNA-binding protein, involved in the regulation of inflammatory response by stabilizing selective inflammation-related mRNAs, such as STAT3 and TBX21. Also stabilizes IL6 mRNA. Binds to stem loop structures located in the 3'UTRs of IL6, STAT3 and TBX21 mRNAs; at least for STAT3 prevents binding of ZC3H12A to the mRNA stem loop structure thus inhibiting its degradation activity. Contributes to elevated IL6 levels possibly implicated in autoimmunity processes. IL6-dependent stabilization of STAT3 mRNA may promote differentiation of naive CD4+ T-cells into T-helper Th17 cells. In CD4+ T-cells may also inhibit RORC-induced Th17 cell differentiation independently of IL6 signaling. Stabilization of TBX21 mRNA contributes to elevated interferon-gamma secretion in Th1 cells possibly implicated in the establishment of septic shock. Stabilizes TNFRSF4/OX40 mRNA by binding to the conserved stem loop structure in its 3'UTR; thereby competing with the mRNA-destabilizing functions of RC3H1 and endoribonuclease ZC3H12A. The protein is AT-rich interactive domain-containing protein 5A (ARID5A) of Bos taurus (Bovine).